A 103-amino-acid chain; its full sequence is Large ribosomal subunit protein bL21 (103 aa).

It belongs to the bacterial ribosomal protein bL21 family. As to quaternary structure, part of the 50S ribosomal subunit. Contacts protein L20.

Functionally, this protein binds to 23S rRNA in the presence of protein L20. This chain is Large ribosomal subunit protein bL21, found in Yersinia enterocolitica serotype O:8 / biotype 1B (strain NCTC 13174 / 8081).